Here is a 340-residue protein sequence, read N- to C-terminus: Ketol-acid reductoisomerase (NADP(+)) (340 aa).

Residues Met-1–Thr-183 enclose the KARI N-terminal Rossmann domain. NADP(+) is bound by residues Phe-26–Gln-29, Arg-49, Ser-52, Ser-54, and Asp-84–Gln-87. His-109 is a catalytic residue. Gly-135 is a binding site for NADP(+). In terms of domain architecture, KARI C-terminal knotted spans Thr-184–Ile-329. The Mg(2+) site is built by Asp-192, Glu-196, Glu-228, and Glu-232. Ser-253 is a substrate binding site.

The protein belongs to the ketol-acid reductoisomerase family. Mg(2+) serves as cofactor.

It catalyses the reaction (2R)-2,3-dihydroxy-3-methylbutanoate + NADP(+) = (2S)-2-acetolactate + NADPH + H(+). It carries out the reaction (2R,3R)-2,3-dihydroxy-3-methylpentanoate + NADP(+) = (S)-2-ethyl-2-hydroxy-3-oxobutanoate + NADPH + H(+). The protein operates within amino-acid biosynthesis; L-isoleucine biosynthesis; L-isoleucine from 2-oxobutanoate: step 2/4. It functions in the pathway amino-acid biosynthesis; L-valine biosynthesis; L-valine from pyruvate: step 2/4. Its function is as follows. Involved in the biosynthesis of branched-chain amino acids (BCAA). Catalyzes an alkyl-migration followed by a ketol-acid reduction of (S)-2-acetolactate (S2AL) to yield (R)-2,3-dihydroxy-isovalerate. In the isomerase reaction, S2AL is rearranged via a Mg-dependent methyl migration to produce 3-hydroxy-3-methyl-2-ketobutyrate (HMKB). In the reductase reaction, this 2-ketoacid undergoes a metal-dependent reduction by NADPH to yield (R)-2,3-dihydroxy-isovalerate. The protein is Ketol-acid reductoisomerase (NADP(+)) of Campylobacter jejuni subsp. doylei (strain ATCC BAA-1458 / RM4099 / 269.97).